We begin with the raw amino-acid sequence, 229 residues long: Transmembrane emp24 domain-containing protein 5 (229 aa).

A signal peptide spans 1-27 (MGDKIWLPFPVLLLAALPPVLLPGAAG). At 28-196 (FTPSLDSDFT…IQESNFDRVN (169 aa)) the chain is on the lumenal side. The region spanning 45–126 (RECFYQPMPL…EKVIFFELIL (82 aa)) is the GOLD domain. A helical transmembrane segment spans residues 197-217 (FWSMVNLVVMVVVSAIQVYML). Over 218–229 (KSLFEDKRKSRT) the chain is Cytoplasmic.

This sequence belongs to the EMP24/GP25L family. In terms of assembly, interacts with TMED9 and TMED10.

The protein localises to the endoplasmic reticulum membrane. It is found in the golgi apparatus. Its subcellular location is the cis-Golgi network membrane. The protein resides in the endoplasmic reticulum-Golgi intermediate compartment membrane. Functionally, potential role in vesicular protein trafficking, mainly in the early secretory pathway. Required for the maintenance of the Golgi apparatus; involved in protein exchange between Golgi stacks during assembly. Probably not required for COPI-vesicle-mediated retrograde transport. In Pongo abelii (Sumatran orangutan), this protein is Transmembrane emp24 domain-containing protein 5 (TMED5).